Here is a 134-residue protein sequence, read N- to C-terminus: UPF0102 protein Dshi_2830 (134 aa).

It belongs to the UPF0102 family.

This chain is UPF0102 protein Dshi_2830, found in Dinoroseobacter shibae (strain DSM 16493 / NCIMB 14021 / DFL 12).